Consider the following 469-residue polypeptide: Zinc transporter SLC39A7 (469 aa).

The helical transmembrane segment at 5–25 (LGAPHWVAVGLLTWAALGLLV) threads the bilayer. Composition is skewed to basic and acidic residues over residues 43 to 56 (HGHS…DFHH) and 66 to 114 (HTHE…EHSH). Residues 43 to 122 (HGHSHRRSHE…SHGGYGESGA (80 aa)) form a disordered region. Position 66 is a pros-methylhistidine (H66). A run of 3 helical transmembrane segments spans residues 138-158 (ALGA…LIPV), 169-189 (LQIL…LHLI), and 214-234 (GPIL…LVVE). The span at 242 to 255 (GGHGHSHGHGHTHG) shows a compositional bias: basic residues. Positions 242–313 (GGHGHSHGHG…QNSEEEKTGS (72 aa)) are disordered. Residues 256–266 (HTQGSHGHGTQ) are compositionally biased toward low complexity. Residues S275 and S276 each carry the phosphoserine modification. The segment covering 295 to 313 (RLKDGPLRPQNSEEEKTGS) has biased composition (basic and acidic residues). The next 3 helical transmembrane spans lie at 386 to 406 (LTAI…GGAV), 417 to 437 (GWVL…SVLP), and 448 to 468 (SLLE…IAHL).

It belongs to the ZIP transporter (TC 2.A.5) family. KE4/Catsup subfamily. Homodimer. Methylation at some His residue by METTL9 leads to reduced zinc-binding. In terms of processing, rapidly phosphorylated by CK2 following Zn(2+) treatment. This phosphorylation is required for efficient cytosolic Zn(2+) release.

The protein localises to the endoplasmic reticulum membrane. It is found in the golgi apparatus. The protein resides in the cis-Golgi network membrane. The catalysed reaction is Zn(2+)(in) = Zn(2+)(out). In terms of biological role, transports Zn(2+) from the endoplasmic reticulum (ER)/Golgi apparatus to the cytosol, playing an essential role in the regulation of cytosolic zinc levels. Acts as a gatekeeper of zinc release from intracellular stores, requiring post-translational activation by phosphorylation, resulting in activation of multiple downstream pathways leading to cell growth and proliferation. Has an essential role in B cell development and is required for proper B cell receptor signaling. Plays an important role in maintaining intestinal epithelial homeostasis and skin dermis development by regulating ER function. Controls cell signaling pathways involved in glucose metabolism in skeletal muscle. Has a protective role against ER stress in different biological contexts. Mediates Zn(2+)-induced ferroptosis. This chain is Zinc transporter SLC39A7, found in Canis lupus familiaris (Dog).